Consider the following 562-residue polypeptide: Protein KASH5 (562 aa).

Residues 1–521 (MDLPEGPVGG…PQRLRVTRHP (521 aa)) lie on the Cytoplasmic side of the membrane. Residues 125-153 (ALTSRQLPSGCPEAEEPANLESFGGEDPR) form a disordered region. The stretch at 164-349 (SSLEDLELSN…LEEQLSQTYE (186 aa)) forms a coiled coil. The disordered stretch occupies residues 407 to 481 (ETSEETEFPS…DIPENPPERP (75 aa)). Positions 431-448 (AHPEEGRKEPSMWLTRRE) are enriched in basic and acidic residues. The chain crosses the membrane as a helical; Anchor for type IV membrane protein span at residues 522–542 (LIPAPVLGLLLLLLLSVLLLG). Residues 541-562 (LGPSPPPTWPHLQLCYLQPPPV) form an interaction with SUN1 region. The Perinuclear space segment spans residues 543–562 (PSPPPTWPHLQLCYLQPPPV).

As to quaternary structure, core component the LINC complex which is composed of inner nuclear membrane SUN domain-containing proteins coupled to outer nuclear membrane KASH domain-containing nesprins. SUN and KASH domain-containing proteins seem to bind each other promiscuously; however, differentially expression of LINC complex constituents is giving rise to specific assemblies. At least SUN1/2-containing core LINC complexes are proposed to be hexameric composed of three protomers of each KASH and SUN domain-containing protein. Interacts with SUN1; this interaction mediates its telomere localization by forming a SUN1:KASH5 LINC complex. Component of a probable SUN2:KASH5 LINC complex. Self-associates. Interacts with DYNC1H1, DCTN1, DYNC1I1/2 and PAFAH1B1; suggesting the association with the dynein-dynactin motor complex. In terms of tissue distribution, expressed in testis (at protein level).

The protein localises to the nucleus outer membrane. The protein resides in the nucleus. Its subcellular location is the chromosome. It is found in the telomere. It localises to the nucleus envelope. In terms of biological role, as a component of the LINC (LInker of Nucleoskeleton and Cytoskeleton) complex, involved in the connection between the nuclear lamina and the cytoskeleton. The nucleocytoplasmic interactions established by the LINC complex play an important role in the transmission of mechanical forces across the nuclear envelope and in nuclear movement and positioning. Required for telomere attachment to nuclear envelope in the prophase of meiosis. Required for rapid telomere prophase movements implicating a SUN1/2:KASH5 LINC complex in which SUN1 and SUN2 seem to act at least partial redundantly. Required for homolog pairing during meiotic prophase in spermatocytes and probably oocytes. Essential for male and female gametogenesis. Recruits cytoplasmic dynein to telomere attachment sites at the nuclear envelope in spermatocytes. In oocytes is involved in meiotic resumption and spindle formation. The sequence is that of Protein KASH5 from Homo sapiens (Human).